The chain runs to 87 residues: Small ribosomal subunit protein uS17 (87 aa).

Belongs to the universal ribosomal protein uS17 family. Part of the 30S ribosomal subunit.

In terms of biological role, one of the primary rRNA binding proteins, it binds specifically to the 5'-end of 16S ribosomal RNA. This Neisseria gonorrhoeae (strain ATCC 700825 / FA 1090) protein is Small ribosomal subunit protein uS17.